A 602-amino-acid polypeptide reads, in one-letter code: Elongation factor 4 (602 aa).

A tr-type G domain is found at 7–189; sequence KYIRNFSIVA…AIVSKVPAPY (183 aa). GTP contacts are provided by residues 19–24 and 136–139; these read DHGKST and NKID.

The protein belongs to the TRAFAC class translation factor GTPase superfamily. Classic translation factor GTPase family. LepA subfamily.

It localises to the cell membrane. It catalyses the reaction GTP + H2O = GDP + phosphate + H(+). Functionally, required for accurate and efficient protein synthesis under certain stress conditions. May act as a fidelity factor of the translation reaction, by catalyzing a one-codon backward translocation of tRNAs on improperly translocated ribosomes. Back-translocation proceeds from a post-translocation (POST) complex to a pre-translocation (PRE) complex, thus giving elongation factor G a second chance to translocate the tRNAs correctly. Binds to ribosomes in a GTP-dependent manner. The chain is Elongation factor 4 from Clostridium botulinum (strain Loch Maree / Type A3).